Reading from the N-terminus, the 203-residue chain is Ribonuclease T (203 aa).

The 175-residue stretch at 11 to 185 (VVVDVETGGF…YDTEKTAELF (175 aa)) folds into the Exonuclease domain. The Mg(2+) site is built by Asp14, Glu16, His172, and Asp177. The Proton donor/acceptor role is filled by His172.

Belongs to the RNase T family. In terms of assembly, homodimer. Requires Mg(2+) as cofactor.

Trims short 3' overhangs of a variety of RNA species, leaving a one or two nucleotide 3' overhang. Responsible for the end-turnover of tRNA: specifically removes the terminal AMP residue from uncharged tRNA (tRNA-C-C-A). Also appears to be involved in tRNA biosynthesis. The sequence is that of Ribonuclease T from Pseudomonas putida (strain ATCC 47054 / DSM 6125 / CFBP 8728 / NCIMB 11950 / KT2440).